The sequence spans 432 residues: UDP-glucosyltransferase B1 (432 aa).

Belongs to the UDP-glycosyltransferase family.

It catalyses the reaction (9Z)-17-hydroxyoctadec-9-enoate 17-O-beta-D-glucoside + UDP-alpha-D-glucose = (9Z)-17-hydroxyoctadec-9-enoate 17-O-sophoroside + UDP + H(+). In terms of biological role, catalyzes the second glycosylation step of sophorolipid biosynthesis, the further glucosylation of the previoulsy formed glucolipid to give rise to an acidic sophorolipid. This chain is UDP-glucosyltransferase B1, found in Starmerella bombicola (Yeast).